The chain runs to 78 residues: U-scoloptoxin(04)-Er1e (78 aa).

Residues 1 to 24 (MTRHLIFAAMLLVCLFVCWNAVGA) form the signal peptide. Residues 25-28 (RDAR) constitute a propeptide that is removed on maturation.

This sequence belongs to the scoloptoxin-04 family. Contains 2 disulfide bonds. Expressed by the venom gland.

It is found in the secreted. This Ethmostigmus rubripes (Giant centipede) protein is U-scoloptoxin(04)-Er1e.